Here is a 534-residue protein sequence, read N- to C-terminus: uncharacterized protein (534 aa).

A run of 5 helical transmembrane segments spans residues 4-22 (ILVL…RVSF), 24-46 (GISL…GWTI), 56-75 (ALFV…RGLA), 82-104 (AITG…RLLG), and 134-156 (PAAV…VLFV). The interval 167-187 (GDSDGTDSASETSGQSSAEIA) is disordered. Positions 172 to 187 (TDSASETSGQSSAEIA) are enriched in polar residues. RCK C-terminal domains lie at 180-264 (GQSS…TLGE) and 265-349 (LQDT…AVGH). 6 helical membrane passes run 359–378 (LLSL…LSLQ), 382–401 (FSMS…ILGH), 408–430 (IRGS…LFLA), 445–467 (MERG…LVGF), 479–501 (WQSL…LTGA), and 511–533 (YVAA…VELI).

Belongs to the AAE transporter (TC 2.A.81) family.

The protein resides in the cell membrane. This is an uncharacterized protein from Rhodopirellula baltica (strain DSM 10527 / NCIMB 13988 / SH1).